Reading from the N-terminus, the 313-residue chain is Protein-glutamine deamidase Cif (313 aa).

Active-site residues include cysteine 128, histidine 186, and glutamine 205.

It belongs to the Cif family.

Its subcellular location is the secreted. It is found in the host nucleus. The catalysed reaction is L-glutaminyl-[protein] + H2O = L-glutamyl-[protein] + NH4(+). Protein-glutamine deamidase effector that inhibits the host cell cycle and other key cellular processes such as the actin network and programmed-cell death. Acts by mediating the side chain deamidation of 'Gln-40' of host NEDD8, converting it to glutamate, thereby abolishing the activity of cullin-RING-based E3 ubiquitin-protein ligase complexes (CRL complexes). Inactivation of CRL complexes prevents ubiquitination and subsequent degradation of the cyclin-dependent kinase inhibitors CDKN1A/p21 and CDKN1B/p27, leading to G1 and G2 cell cycle arrests in host cells. Deamidation of 'Gln-40' of host NEDD8 also triggers macrophage-specific programmed cell death. Also able to catalyze deamidation of 'Gln-40' of host ubiquitin in vitro; however, NEDD8 constitutes the preferred substrate in vivo. This is Protein-glutamine deamidase Cif from Photorhabdus laumondii subsp. laumondii (strain DSM 15139 / CIP 105565 / TT01) (Photorhabdus luminescens subsp. laumondii).